Consider the following 508-residue polypeptide: Histidine ammonia-lyase (508 aa).

Residues 145 to 147 constitute a cross-link (5-imidazolinone (Ala-Gly)); the sequence is ASG. Ser146 carries the post-translational modification 2,3-didehydroalanine (Ser).

Belongs to the PAL/histidase family. In terms of processing, contains an active site 4-methylidene-imidazol-5-one (MIO), which is formed autocatalytically by cyclization and dehydration of residues Ala-Ser-Gly.

Its subcellular location is the cytoplasm. The catalysed reaction is L-histidine = trans-urocanate + NH4(+). The protein operates within amino-acid degradation; L-histidine degradation into L-glutamate; N-formimidoyl-L-glutamate from L-histidine: step 1/3. The polypeptide is Histidine ammonia-lyase (Myxococcus xanthus (strain DK1622)).